A 341-amino-acid polypeptide reads, in one-letter code: tRNA dimethylallyltransferase (341 aa).

An ATP-binding site is contributed by glycine 15–threonine 22. A substrate-binding site is contributed by threonine 17–threonine 22. 4 interaction with substrate tRNA regions span residues aspartate 44–leucine 47, glutamine 168–arginine 172, arginine 253–arginine 258, and lysine 302–arginine 309.

It belongs to the IPP transferase family. As to quaternary structure, monomer. Mg(2+) serves as cofactor.

It carries out the reaction adenosine(37) in tRNA + dimethylallyl diphosphate = N(6)-dimethylallyladenosine(37) in tRNA + diphosphate. Functionally, catalyzes the transfer of a dimethylallyl group onto the adenine at position 37 in tRNAs that read codons beginning with uridine, leading to the formation of N6-(dimethylallyl)adenosine (i(6)A). This is tRNA dimethylallyltransferase from Verminephrobacter eiseniae (strain EF01-2).